The following is a 677-amino-acid chain: Elongation factor G 2 (677 aa).

Residues 8 to 283 (SRIRNIGIIA…AVVNFLPSPE (276 aa)) form the tr-type G domain. GTP-binding positions include 17–24 (AHIDAGKT), 81–85 (DTPGH), and 135–138 (NKMD).

Belongs to the TRAFAC class translation factor GTPase superfamily. Classic translation factor GTPase family. EF-G/EF-2 subfamily.

The protein resides in the cytoplasm. Its function is as follows. Catalyzes the GTP-dependent ribosomal translocation step during translation elongation. During this step, the ribosome changes from the pre-translocational (PRE) to the post-translocational (POST) state as the newly formed A-site-bound peptidyl-tRNA and P-site-bound deacylated tRNA move to the P and E sites, respectively. Catalyzes the coordinated movement of the two tRNA molecules, the mRNA and conformational changes in the ribosome. The protein is Elongation factor G 2 of Syntrophus aciditrophicus (strain SB).